Here is a 54-residue protein sequence, read N- to C-terminus: U-myrmicitoxin(01)-Tb5a (54 aa).

Positions 1 to 26 are cleaved as a signal peptide; the sequence is MQLSHLLLAFAMIFVMTIMYAPQVQA. Residues 27–38 constitute a propeptide that is removed on maturation; it reads DAWADANADADV.

This sequence belongs to the formicidae venom precursor-01 superfamily. In terms of processing, contains 1 disulfide bond. As to expression, expressed by the venom gland.

The protein resides in the secreted. This chain is U-myrmicitoxin(01)-Tb5a, found in Tetramorium bicarinatum (Tramp ant).